The sequence spans 763 residues: Phosphoglycerol transferase I (763 aa).

The next 4 membrane-spanning stretches (helical) occupy residues 1–21, 26–46, 77–97, and 108–128; these read MSELLSVALFLASVLIYAWKA, WWFAATLTVLGLFVILNITLY, ILPGIGIALALVAVFGALGWV, and VGYSLLALLLALGSVDASPAF.

This sequence belongs to the OpgB family.

Its subcellular location is the cell inner membrane. It carries out the reaction a phosphatidylglycerol + a membrane-derived-oligosaccharide D-glucose = a 1,2-diacyl-sn-glycerol + a membrane-derived-oligosaccharide 6-(glycerophospho)-D-glucose.. Its pathway is glycan metabolism; osmoregulated periplasmic glucan (OPG) biosynthesis. Its function is as follows. Transfers a phosphoglycerol residue from phosphatidylglycerol to the membrane-bound nascent glucan backbones. The chain is Phosphoglycerol transferase I from Salmonella dublin (strain CT_02021853).